Here is a 298-residue protein sequence, read N- to C-terminus: Acetylglutamate kinase (298 aa).

Residues 69 to 70, arginine 91, and asparagine 191 each bind substrate; that span reads GG.

This sequence belongs to the acetylglutamate kinase family. ArgB subfamily.

It is found in the cytoplasm. It carries out the reaction N-acetyl-L-glutamate + ATP = N-acetyl-L-glutamyl 5-phosphate + ADP. It functions in the pathway amino-acid biosynthesis; L-arginine biosynthesis; N(2)-acetyl-L-ornithine from L-glutamate: step 2/4. Its function is as follows. Catalyzes the ATP-dependent phosphorylation of N-acetyl-L-glutamate. In Neisseria meningitidis serogroup C (strain 053442), this protein is Acetylglutamate kinase.